The sequence spans 2211 residues: Coagulation factor V (2211 aa).

Positions 1 to 28 (MFLACPGFWVLVVLGSSWAGWGNLGAEA) are cleaved as a signal peptide. Plastocyanin-like domains are found at residues 30–193 (KLRQ…LLIC), 203–327 (TQKM…IDIK), 348–525 (KRWE…LLIC), and 535–686 (IQRA…FRDA). F5/8 type A domains are found at residues 30 to 327 (KLRQ…IDIK) and 348 to 686 (KRWE…FRDA). 2 residues coordinate Ca(2+): Asp139 and Asp140. Cys167 and Cys193 are oxidised to a cystine. Residues Asn225, Asn239, Asn297, Asn382, and Asn460 are each glycosylated (N-linked (GlcNAc...) asparagine). A disulfide bond links Cys248 and Cys329. A disulfide bond links Cys499 and Cys525. 2 N-linked (GlcNAc...) asparagine glycosylation sites follow: Asn553 and Asn587. Cys607 and Cys688 are oxidised to a cystine. Thr644 bears the Phosphothreonine mark. The b stretch occupies residues 696 to 1564 (SYEIIYEPSG…PDNIAAWYLR (869 aa)). 3 positions are modified to sulfotyrosine: Tyr697, Tyr701, and Tyr730. Positions 742-1564 (SFRNSSLNQE…PDNIAAWYLR (823 aa)) are cleaved as a propeptide — activation peptide (connecting region). N-linked (GlcNAc...) asparagine glycosylation is found at Asn745, Asn756, Asn774, and Asn780. The interval 814 to 844 (LEHAGLDKNSALNPPMAEHSSPYSEDPREDH) is disordered. N-linked (GlcNAc...) asparagine glycans are attached at residues Asn902, Asn952, and Asn964. Residues 954-969 (TVNKLPNSPQNDSRTW) are compositionally biased toward polar residues. A disordered region spans residues 954–1039 (TVNKLPNSPQ…PLSPRSFHPL (86 aa)). The segment covering 995–1009 (PLQDRQDRRNSRLKE) has biased composition (basic and acidic residues). N-linked (GlcNAc...) asparagine glycosylation is found at Asn1044, Asn1053, Asn1062, Asn1071, Asn1078, and Asn1094. Disordered stretches follow at residues 1084-1162 (SLPD…IPNY) and 1195-1471 (QPSI…FGQT). Composition is skewed to polar residues over residues 1091 to 1103 (TSPN…TSSP) and 1127 to 1160 (THST…SQIP). A run of 30 repeats spans residues 1124–1137 (SDPT…SNRS), 1138–1151 (PDPT…SNRS), 1188–1196 (ATSLDLSQP), 1197–1205 (SISPDLGQM), 1206–1214 (ALSPDPGQE), 1215–1223 (SLSPDLGQT), 1224–1232 (SLSPDLSQE), 1233–1241 (SLSPDLGQT), 1242–1250 (ALSPDPSQE), 1251–1259 (SLSPDLGQT), 1260–1268 (ALSPDPSQE), 1269–1277 (SLSPDLGQT), 1278–1286 (ALSPDPGQE), 1287–1295 (SLSPDLGQT), 1296–1304 (SLSPDLSQE), 1305–1313 (SLSPDLGQT), 1314–1322 (ALSPDPSQE), 1323–1331 (SLSPDLGQT), 1332–1340 (ALSPDPSQE), 1341–1349 (SLSPDLGQT), 1350–1358 (SLSPDLGQE), 1359–1367 (SLSPDLGQT), 1368–1376 (ALSPDPSQE), 1377–1385 (SLSPDLGQT), 1386–1394 (SLSPDLGQE), 1395–1403 (SLSPDLGQT), 1404–1412 (ALSPDLSQE), 1413–1421 (SLSPDLGQT), 1422–1430 (PLSPDLSLE), and 1431–1439 (SLSPDLSQL). Residues 1124–1151 (SDPTHSTTAPSNRSPDPTHSTTAPSNRS) are 2 X 14 AA tandem repeats. Residues 1188–1453 (ATSLDLSQPS…TSPPLDLNQT (266 aa)) form a 30 X 9 AA approximate tandem repeats of [AS]-L-S-P-D-[LP]-[GS]-Q-[TE] region. Composition is skewed to polar residues over residues 1214-1234 (ESLS…QESL), 1241-1252 (TALSPDPSQESL), 1259-1270 (TALSPDPSQESL), 1286-1306 (ESLS…QESL), 1313-1324 (TALSPDPSQESL), 1331-1352 (TALS…TSLS), 1367-1388 (TALS…TSLS), and 1403-1414 (TALSPDLSQESL). A compositionally biased stretch (low complexity) spans 1422-1441 (PLSPDLSLESLSPDLSQLDL). One copy of the 2-29; truncated repeat lies at 1440–1444 (DLKQT). Residues 1442-1463 (KQTSPPLDLNQTSHTSESSQSL) show a composition bias toward polar residues. A 2-30 repeat occupies 1445–1453 (SPPLDLNQT). Residues Asn1451 and Asn1490 are each glycosylated (N-linked (GlcNAc...) asparagine). Sulfotyrosine occurs at positions 1513, 1529, 1537, and 1541. 2 N-linked (GlcNAc...) asparagine glycosylation sites follow: Asn1550 and Asn1690. Plastocyanin-like domains lie at 1569–1738 (NRKY…LLIC) and 1748–1890 (NMPV…FLIV). An F5/8 type A 3 domain is found at 1569-1890 (NRKYYYIAAE…AGMQTPFLIV (322 aa)). A disulfide bond links Cys1712 and Cys1738. 2 residues coordinate Cu cation: His1830 and His1832. Asn1839 is a glycosylation site (N-linked (GlcNAc...) asparagine). Position 1872 (Asp1872) interacts with Cu cation. Cystine bridges form between Cys1894–Cys2048 and Cys2053–Cys2208. F5/8 type C domains lie at 1894–2048 (CKMP…LQGC) and 2053–2208 (CSTP…LFGC). 2 N-linked (GlcNAc...) asparagine glycosylation sites follow: Asn1997 and Asn2196.

Belongs to the multicopper oxidase family. Factor Va, the activated form of factor V, is composed of a heavy chain and a light chain, non-covalently bound. The interaction between the two chains is calcium-dependent. Forms heterodimer with SERPINA5. Thrombin activates factor V proteolytically to the active cofactor, factor Va (formation of a heavy chain at the N-terminus and a light chain at the C-terminus). Post-translationally, sulfation is required for efficient thrombin cleavage and activation and for full procoagulant activity. In terms of processing, activated protein C inactivates factor V and factor Va by proteolytic degradation.

It is found in the secreted. With respect to regulation, inhibited by SERPINA5. In terms of biological role, central regulator of hemostasis. It serves as a critical cofactor for the prothrombinase activity of factor Xa that results in the activation of prothrombin to thrombin. The sequence is that of Coagulation factor V (F5) from Bos taurus (Bovine).